A 68-amino-acid chain; its full sequence is Large ribosomal subunit protein bL33c (68 aa).

The protein belongs to the bacterial ribosomal protein bL33 family.

The protein resides in the plastid. Its subcellular location is the chloroplast. This is Large ribosomal subunit protein bL33c from Lactuca sativa (Garden lettuce).